The primary structure comprises 695 residues: Centrosomal protein kizuna (695 aa).

The span at 1–12 (MPRGRGGGGGGL) shows a compositional bias: gly residues. The tract at residues 1-24 (MPRGRGGGGGGLRQASATSAPLAS) is disordered. The span at 15 to 24 (ASATSAPLAS) shows a compositional bias: low complexity. 2 coiled-coil regions span residues 29-57 (ERVG…EYNK) and 102-132 (VEHL…LSKD). Disordered regions lie at residues 261–313 (EIGS…SDRE), 351–391 (HSAW…SDLT), 444–465 (QSFP…EKVP), and 633–695 (SEAS…FYDT). Polar residues-rich tracts occupy residues 263-274 (GSSTQHSKSNLS) and 282-297 (LHSS…NSIT). 2 stretches are compositionally biased toward basic and acidic residues: residues 299 to 313 (LKCD…SDRE) and 360 to 377 (DLDH…KHEE). Residues 382 to 391 (GSSCSSSDLT) are compositionally biased toward low complexity. At T391 the chain carries Phosphothreonine; by PLK1. A compositionally biased stretch (basic and acidic residues) spans 448–465 (DSKREPSPDSPRQPEKVP). Over residues 633 to 645 (SEASFSSSEGSPL) the composition is skewed to low complexity. S667, S670, and S672 each carry phosphoserine. Positions 676–686 (AALRPRDHDMP) are enriched in basic and acidic residues.

The protein belongs to the kizuna family. As to quaternary structure, interacts with AKAP9, CEP72, ODF2, PCNT and TUBGCP2. Post-translationally, phosphorylation at Thr-391 by PLK1 is not needed for centrosomal localization or pericentriolar material expansion but is indispensable for spindle-pole stabilization.

It localises to the cytoplasm. It is found in the cytoskeleton. The protein resides in the microtubule organizing center. The protein localises to the centrosome. Its subcellular location is the cilium basal body. Centrosomal protein required for establishing a robust mitotic centrosome architecture that can endure the forces that converge on the centrosomes during spindle formation. Required for stabilizing the expanded pericentriolar material around the centriole. The sequence is that of Centrosomal protein kizuna (Kiz) from Mus musculus (Mouse).